A 234-amino-acid polypeptide reads, in one-letter code: S-adenosylmethionine synthase 1 (234 aa).

Residues 10 to 12, 78 to 81, aspartate 89, 95 to 96, alanine 112, lysine 116, and lysine 120 each bind ATP; these read DGK, SGRF, and RK. Residue aspartate 89 coordinates L-methionine. Lysine 120 provides a ligand contact to L-methionine.

This sequence belongs to the AdoMet synthase family. As to quaternary structure, homotetramer. Mn(2+) serves as cofactor. It depends on Mg(2+) as a cofactor. Requires Co(2+) as cofactor. The cofactor is K(+). In terms of tissue distribution, mainly in floral buds and roots.

It localises to the cytoplasm. The enzyme catalyses L-methionine + ATP + H2O = S-adenosyl-L-methionine + phosphate + diphosphate. Its pathway is amino-acid biosynthesis; S-adenosyl-L-methionine biosynthesis; S-adenosyl-L-methionine from L-methionine: step 1/1. In terms of biological role, catalyzes the formation of S-adenosylmethionine from methionine and ATP. The reaction comprises two steps that are both catalyzed by the same enzyme: formation of S-adenosylmethionine (AdoMet) and triphosphate, and subsequent hydrolysis of the triphosphate. The protein is S-adenosylmethionine synthase 1 (SMS-1) of Petroselinum crispum (Parsley).